The primary structure comprises 191 residues: Surfactant protein C (191 aa).

The propeptide occupies 1 to 23 (MDVGSKEVLMESPPDYSAAPRGR). 2 S-palmitoyl cysteine lipidation sites follow: Cys28 and Cys29. Residues 59 to 191 (HMSQKHTEMV…LCGEVPLYYI (133 aa)) constitute a propeptide that is removed on maturation. The 98-residue stretch at 94–191 (FSFGSTGLVV…LCGEVPLYYI (98 aa)) folds into the BRICHOS domain. Cysteines 121 and 183 form a disulfide.

It is found in the secreted. Its subcellular location is the extracellular space. The protein resides in the surface film. Functionally, pulmonary surfactant associated proteins promote alveolar stability by lowering the surface tension at the air-liquid interface in the peripheral air spaces. In Macaca mulatta (Rhesus macaque), this protein is Surfactant protein C (SFTPC).